The sequence spans 180 residues: Magnetosome protein MamS (180 aa).

Residues 1-21 (MDFRPDQVVARIRGAVEGALT) lie on the Cytoplasmic side of the membrane. A helical membrane pass occupies residues 22–42 (AQSVLGIGGALVLILVVIALL). Topologically, residues 43 to 180 (PDRFTRGEGK…EGLALWMTVQ (138 aa)) are lumenal.

The protein belongs to the magnetosome MamS family.

Its subcellular location is the magnetosome membrane. Functionally, may play a role in magnetite crystal growth and size. The polypeptide is Magnetosome protein MamS (Magnetospirillum gryphiswaldense (strain DSM 6361 / JCM 21280 / NBRC 15271 / MSR-1)).